Reading from the N-terminus, the 61-residue chain is uncharacterized protein (61 aa).

A run of 2 helical transmembrane segments spans residues 4–24 (IIAFIWTFLLSHMACYLVASM) and 34–54 (SSVIAVVLYVLIMVLAEIMPM).

It is found in the cell membrane. This is an uncharacterized protein from Bacillus subtilis (strain 168).